The following is a 266-amino-acid chain: Dihydropteroate synthase (266 aa).

Residues 12 to 260 (AAIMGILNVT…DVKANQDIVA (249 aa)) enclose the Pterin-binding domain. Asn-19 lines the Mg(2+) pocket. Residues Thr-59, Asp-93, Asn-112, Asp-176, Lys-212, and 248–250 (RVH) contribute to the (7,8-dihydropterin-6-yl)methyl diphosphate site.

The protein belongs to the DHPS family. In terms of assembly, homodimer or homotrimer. Mg(2+) serves as cofactor.

The enzyme catalyses (7,8-dihydropterin-6-yl)methyl diphosphate + 4-aminobenzoate = 7,8-dihydropteroate + diphosphate. The protein operates within cofactor biosynthesis; tetrahydrofolate biosynthesis; 7,8-dihydrofolate from 2-amino-4-hydroxy-6-hydroxymethyl-7,8-dihydropteridine diphosphate and 4-aminobenzoate: step 1/2. Functionally, catalyzes the condensation of para-aminobenzoate (pABA) with 6-hydroxymethyl-7,8-dihydropterin diphosphate (DHPt-PP) to form 7,8-dihydropteroate (H2Pte), the immediate precursor of folate derivatives. The sequence is that of Dihydropteroate synthase (folP) from Streptococcus pyogenes serotype M1.